The sequence spans 184 residues: Glutathione-regulated potassium-efflux system ancillary protein KefG (184 aa).

This sequence belongs to the NAD(P)H dehydrogenase (quinone) family. KefG subfamily. In terms of assembly, interacts with KefB.

It is found in the cell inner membrane. It catalyses the reaction a quinone + NADH + H(+) = a quinol + NAD(+). It carries out the reaction a quinone + NADPH + H(+) = a quinol + NADP(+). In terms of biological role, regulatory subunit of a potassium efflux system that confers protection against electrophiles. Required for full activity of KefB. This chain is Glutathione-regulated potassium-efflux system ancillary protein KefG, found in Shigella dysenteriae serotype 1 (strain Sd197).